A 218-amino-acid polypeptide reads, in one-letter code: N-(5'-phosphoribosyl)anthranilate isomerase (218 aa).

Belongs to the TrpF family.

It carries out the reaction N-(5-phospho-beta-D-ribosyl)anthranilate = 1-(2-carboxyphenylamino)-1-deoxy-D-ribulose 5-phosphate. Its pathway is amino-acid biosynthesis; L-tryptophan biosynthesis; L-tryptophan from chorismate: step 3/5. The chain is N-(5'-phosphoribosyl)anthranilate isomerase from Rhodopseudomonas palustris (strain BisA53).